The primary structure comprises 90 residues: Carboxysome shell vertex protein CsoS4A (90 aa).

The BMV domain occupies 1 to 78 (MKIYKVDKTL…SDLTIVGIID (78 aa)).

The protein belongs to the CcmL/EutN family. CsoS4 subfamily. As to quaternary structure, homopentamer.

The protein localises to the carboxysome. In terms of biological role, probably forms vertices in the carboxysome, a polyhedral inclusion where RuBisCO (ribulose bisphosphate carboxylase, cbbL-cbbS) is sequestered. Has been modeled to induce curvature upon insertion into an otherwise flat hexagonal layer of major carboxysome subunits. The chain is Carboxysome shell vertex protein CsoS4A from Hydrogenovibrio crunogenus (strain DSM 25203 / XCL-2) (Thiomicrospira crunogena).